Reading from the N-terminus, the 338-residue chain is Dihydroorotate dehydrogenase (quinone) (338 aa).

FMN is bound by residues 68–72 (AGMDK) and Thr92. A substrate-binding site is contributed by Lys72. Residue 117 to 121 (NRMGF) participates in substrate binding. The FMN site is built by Ser147 and Asn180. A substrate-binding site is contributed by Asn180. Ser183 acts as the Nucleophile in catalysis. Residue Asn185 participates in substrate binding. Positions 214 and 242 each coordinate FMN. 243–244 (NT) lines the substrate pocket. FMN-binding positions include Gly267, Gly296, and 317–318 (YT).

This sequence belongs to the dihydroorotate dehydrogenase family. Type 2 subfamily. In terms of assembly, monomer. FMN serves as cofactor.

It localises to the cell membrane. It carries out the reaction (S)-dihydroorotate + a quinone = orotate + a quinol. The protein operates within pyrimidine metabolism; UMP biosynthesis via de novo pathway; orotate from (S)-dihydroorotate (quinone route): step 1/1. In terms of biological role, catalyzes the conversion of dihydroorotate to orotate with quinone as electron acceptor. In Salinispora arenicola (strain CNS-205), this protein is Dihydroorotate dehydrogenase (quinone).